Here is a 418-residue protein sequence, read N- to C-terminus: NADH-quinone oxidoreductase subunit D (418 aa).

It belongs to the complex I 49 kDa subunit family. As to quaternary structure, NDH-1 is composed of 14 different subunits. Subunits NuoB, C, D, E, F, and G constitute the peripheral sector of the complex.

It localises to the cell inner membrane. It catalyses the reaction a quinone + NADH + 5 H(+)(in) = a quinol + NAD(+) + 4 H(+)(out). Functionally, NDH-1 shuttles electrons from NADH, via FMN and iron-sulfur (Fe-S) centers, to quinones in the respiratory chain. The immediate electron acceptor for the enzyme in this species is believed to be ubiquinone. Couples the redox reaction to proton translocation (for every two electrons transferred, four hydrogen ions are translocated across the cytoplasmic membrane), and thus conserves the redox energy in a proton gradient. This Neisseria meningitidis serogroup A / serotype 4A (strain DSM 15465 / Z2491) protein is NADH-quinone oxidoreductase subunit D.